A 196-amino-acid chain; its full sequence is Ribosome maturation factor RimP (196 aa).

A disordered region spans residues 176–196 (ETNFDEVSTELETDTPSEGDQ). Residues 177–196 (TNFDEVSTELETDTPSEGDQ) show a composition bias toward acidic residues.

The protein belongs to the RimP family.

It localises to the cytoplasm. Functionally, required for maturation of 30S ribosomal subunits. In Roseobacter denitrificans (strain ATCC 33942 / OCh 114) (Erythrobacter sp. (strain OCh 114)), this protein is Ribosome maturation factor RimP.